The chain runs to 309 residues: Ornithine carbamoyltransferase (309 aa).

Carbamoyl phosphate is bound by residues 51-54 (STRT), Gln-78, Arg-102, and 129-132 (HPVQ). L-ornithine is bound by residues Asn-160, Asp-224, and 228–229 (SM). Residues 264-265 (CL) and Arg-292 each bind carbamoyl phosphate.

It belongs to the aspartate/ornithine carbamoyltransferase superfamily. OTCase family.

It is found in the cytoplasm. The catalysed reaction is carbamoyl phosphate + L-ornithine = L-citrulline + phosphate + H(+). It functions in the pathway amino-acid biosynthesis; L-arginine biosynthesis; L-arginine from L-ornithine and carbamoyl phosphate: step 1/3. Its function is as follows. Reversibly catalyzes the transfer of the carbamoyl group from carbamoyl phosphate (CP) to the N(epsilon) atom of ornithine (ORN) to produce L-citrulline. In Campylobacter fetus subsp. fetus (strain 82-40), this protein is Ornithine carbamoyltransferase.